A 240-amino-acid polypeptide reads, in one-letter code: UPF0173 metal-dependent hydrolase OE_2513F (240 aa).

Belongs to the UPF0173 family.

The protein is UPF0173 metal-dependent hydrolase OE_2513F of Halobacterium salinarum (strain ATCC 29341 / DSM 671 / R1).